The following is a 383-amino-acid chain: Succinyl-diaminopimelate desuccinylase (383 aa).

Position 73 (H73) interacts with Zn(2+). D75 is a catalytic residue. D107 serves as a coordination point for Zn(2+). E141 functions as the Proton acceptor in the catalytic mechanism. The Zn(2+) site is built by E142, E170, and H356.

Belongs to the peptidase M20A family. DapE subfamily. Homodimer. Zn(2+) is required as a cofactor. It depends on Co(2+) as a cofactor.

It carries out the reaction N-succinyl-(2S,6S)-2,6-diaminopimelate + H2O = (2S,6S)-2,6-diaminopimelate + succinate. It participates in amino-acid biosynthesis; L-lysine biosynthesis via DAP pathway; LL-2,6-diaminopimelate from (S)-tetrahydrodipicolinate (succinylase route): step 3/3. Its function is as follows. Catalyzes the hydrolysis of N-succinyl-L,L-diaminopimelic acid (SDAP), forming succinate and LL-2,6-diaminopimelate (DAP), an intermediate involved in the bacterial biosynthesis of lysine and meso-diaminopimelic acid, an essential component of bacterial cell walls. This Pseudomonas entomophila (strain L48) protein is Succinyl-diaminopimelate desuccinylase.